A 190-amino-acid chain; its full sequence is UPF0200 protein TGAM_0868 (190 aa).

Gly-7–Ser-14 is a binding site for ATP.

The protein belongs to the UPF0200 family.

This is UPF0200 protein TGAM_0868 from Thermococcus gammatolerans (strain DSM 15229 / JCM 11827 / EJ3).